A 576-amino-acid chain; its full sequence is MATHSMIIPSPSSSSSSLATAASPFKETLPLFSRSLTFPRKSLFSQVRLRFFAEKHSQLDTSNGCATNFASLQDSGDQLTEEHVTKGESTLSITVVGASGDLAKKKIFPALFALFYEGCLPQDFSVFGYARTKLTHEELRDMISSTLTCRIDQREKCGDKMEQFLKRCFYHSGQYNSEEDFAELNKKLKEKEAGKISNRLYYLSIPPNIFVDVVRCASLRASSENGWTRVIVEKPFGRDSESSGELTRCLKQYLTEEQIFRIDHYLGKELVENLSVLRFSNLVFEPLWSRNYIRNVQLIFSEDFGTEGRGGYFDQYGIIRDIMQNHLLQILALFAMETPVSLDAEDIRSEKVKVLRSMKPLRLEDVVVGQYKGHNKGGKTYPGYTDDPTVPNHSLTPTFAAAAMFINNARWDGVPFLMKAGKALHTRGAEIRVQFRHVPGNLYKKSFATNLDNATNELVIRVQPDEGIYLRINNKVPGLGMRLDRSDLNLLYRSRYPREIPDAYERLLLDAIEGERRLFIRSDELDAAWDLFTPALKELEEKKIIPELYPYGSRGPVGAHYLASKYNVRWGDLGEA.

The transit peptide at 1–50 directs the protein to the chloroplast; it reads MATHSMIIPSPSSSSSSLATAASPFKETLPLFSRSLTFPRKSLFSQVRLR. NADP(+) contacts are provided by residues 97 to 104 and Arg-131; that span reads GASGDLAK. Cys-149 and Cys-157 form a disulfide bridge. Lys-234 contacts NADP(+). D-glucose 6-phosphate-binding positions include Lys-234, 264–268, Glu-302, and Asp-321; that span reads HYLGK. The active-site Proton acceptor is His-326. Residue Lys-419 participates in NADP(+) binding. The D-glucose 6-phosphate site is built by Lys-422 and Arg-427. 2 residues coordinate NADP(+): Arg-432 and Arg-461. D-glucose 6-phosphate is bound at residue Gln-463. NADP(+) is bound by residues 469 to 471 and Arg-554; that span reads YLR.

The protein belongs to the glucose-6-phosphate dehydrogenase family. In terms of assembly, forms homodimer. Interacts with G6PD2, G6PD3 and G6PD4. In terms of tissue distribution, expressed in leaves, stems, buds, flowers and siliques.

Its subcellular location is the plastid. It is found in the chloroplast stroma. It localises to the peroxisome. It catalyses the reaction D-glucose 6-phosphate + NADP(+) = 6-phospho-D-glucono-1,5-lactone + NADPH + H(+). Its pathway is carbohydrate degradation; pentose phosphate pathway; D-ribulose 5-phosphate from D-glucose 6-phosphate (oxidative stage): step 1/3. With respect to regulation, regulated by metabolites. Post-translationally inactivated by cysteine-mediated redox modification via the ferredoxin-thioredoxin system in the light and this avoids futile cycles with photosynthetic CO2 fixation. Functionally, catalyzes the rate-limiting step of the oxidative pentose-phosphate pathway, which represents a route for the dissimilation of carbohydrates besides glycolysis. The main function of this enzyme is to provide reducing power (NADPH) and pentose phosphates for fatty acid and nucleic acid synthesis which are involved in membrane synthesis and cell division. This is Glucose-6-phosphate 1-dehydrogenase 1, chloroplastic from Arabidopsis thaliana (Mouse-ear cress).